Here is a 703-residue protein sequence, read N- to C-terminus: Lactococcin-G-processing and transport ATP-binding protein LagD (703 aa).

The 126-residue stretch at 7 to 132 (QQDEKDCGVA…KEWTGVLLFP (126 aa)) folds into the Peptidase C39 domain. The active site involves cysteine 13. The ABC transmembrane type-1 domain occupies 153–435 (PILIKQKSLF…IINLQVKMQK (283 aa)). 7 helical membrane passes run 162–182 (FITI…DNII), 189–209 (TLNI…LFEY), 224–244 (MSIM…FFAT), 267–287 (ATLS…TLAI), 291–311 (QLFL…YVFI), 381–401 (MVIE…YVID), and 409–429 (LITY…IINL). In terms of domain architecture, ABC transporter spans 469–703 (IKLDKVSFSY…EGVYRRLLNA (235 aa)). Position 502–509 (502–509 (GVSGSGKS)) interacts with ATP.

The protein belongs to the ABC transporter superfamily. LagD family. As to quaternary structure, homodimer.

It localises to the cell membrane. LagD (TC 3.A.1) is involved in processing the signal peptide and probably also in export of the bacteriocin lactococcin G. This chain is Lactococcin-G-processing and transport ATP-binding protein LagD (lagD), found in Lactococcus lactis subsp. lactis (Streptococcus lactis).